Reading from the N-terminus, the 486-residue chain is Membrane-bound lytic murein transglycosylase F (486 aa).

The N-terminal stretch at methionine 1–alanine 21 is a signal peptide. Residues leucine 22–valine 268 are non-LT domain. The tract at residues glycine 269 to aspartate 486 is LT domain. Glutamate 313 is an active-site residue.

This sequence in the N-terminal section; belongs to the bacterial solute-binding protein 3 family. The protein in the C-terminal section; belongs to the transglycosylase Slt family.

It localises to the cell outer membrane. It catalyses the reaction Exolytic cleavage of the (1-&gt;4)-beta-glycosidic linkage between N-acetylmuramic acid (MurNAc) and N-acetylglucosamine (GlcNAc) residues in peptidoglycan, from either the reducing or the non-reducing ends of the peptidoglycan chains, with concomitant formation of a 1,6-anhydrobond in the MurNAc residue.. Its function is as follows. Murein-degrading enzyme that degrades murein glycan strands and insoluble, high-molecular weight murein sacculi, with the concomitant formation of a 1,6-anhydromuramoyl product. Lytic transglycosylases (LTs) play an integral role in the metabolism of the peptidoglycan (PG) sacculus. Their lytic action creates space within the PG sacculus to allow for its expansion as well as for the insertion of various structures such as secretion systems and flagella. This is Membrane-bound lytic murein transglycosylase F from Yersinia pseudotuberculosis serotype I (strain IP32953).